A 1733-amino-acid chain; its full sequence is DNA-directed RNA polymerase II subunit RPB1 (1733 aa).

8 residues coordinate Zn(2+): C67, C70, C77, H80, C107, C110, C148, and C167. The segment at 248-260 (PSISFNESQRGED) is lid loop. Positions 306–323 (NDIAGQPQALQKSGRPVK) are rudder loop. Mg(2+) is bound by residues D481, D483, and D485. A Glycyl lysine isopeptide (Lys-Gly) (interchain with G-Cter in ubiquitin) cross-link involves residue K695. The interval 810 to 822 (PQEFFFHAMGGRE) is bridging helix. Glycyl lysine isopeptide (Lys-Gly) (interchain with G-Cter in ubiquitin) cross-links involve residues K1246 and K1350. T1471 is modified (phosphothreonine). A disordered region spans residues 1537 to 1733 (VSSPGFSPTS…QKHNENENSR (197 aa)). Positions 1538–1719 (SSPGFSPTSP…YSPGSPAYSP (182 aa)) are enriched in low complexity. A run of 23 repeats spans residues 1549 to 1555 (YSPTSPA), 1556 to 1562 (YSPTSPS), 1563 to 1569 (YSPTSPS), 1570 to 1576 (YSPTSPS), 1577 to 1583 (YSPTSPS), 1584 to 1590 (YSPTSPS), 1591 to 1597 (YSPTSPS), 1598 to 1604 (YSPTSPS), 1605 to 1611 (YSPTSPS), 1612 to 1618 (YSPTSPS), 1619 to 1625 (YSPTSPS), 1626 to 1632 (YSPTSPS), 1633 to 1639 (YSPTSPS), 1640 to 1646 (YSPTSPS), 1647 to 1653 (YSPTSPS), 1654 to 1660 (YSPTSPA), 1661 to 1667 (YSPTSPS), 1668 to 1674 (YSPTSPS), 1675 to 1681 (YSPTSPS), 1682 to 1688 (YSPTSPS), 1689 to 1695 (YSPTSPN), 1696 to 1702 (YSPTSPS), and 1703 to 1709 (YSPTSPG). A C-terminal domain (CTD); 24 X 7 AA approximate tandem repeats of Y-S-P-T-S-P-[A-S-N-G] region spans residues 1549–1716 (YSPTSPAYSP…SPGYSPGSPA (168 aa)). A 24; approximate repeat occupies 1710 to 1716 (YSPGSPA). A compositionally biased stretch (basic and acidic residues) spans 1720–1733 (KQDEQKHNENENSR).

Belongs to the RNA polymerase beta' chain family. As to quaternary structure, component of the RNA polymerase II (Pol II) complex consisting of 12 subunits. Interacts with DEF1; the interaction is direct and serves to bridge RPB1 to the Elongin complex in a DNA-damaged dependent manner. Interacts with the Elongin subunit ELA1. Interacts with the Elongin subunit ELC1. Interacts with ASK10. Interacts with ESS1. Interacts with RTT103. Interacts with SHE2. Post-translationally, the tandem 7 residues repeats in the C-terminal domain (CTD) can be highly phosphorylated. The phosphorylation activates Pol II. Phosphorylation occurs mainly at residues 'Ser-2' and 'Ser-5' of the heptapeptide repeat. The phosphorylated form of Pol II appears to carry, on average, one phosphate per repeat. The phosphorylation state is believed to result from the balanced action of site-specific CTD kinases and phosphatases, and a 'CTD code' that specifies the position of Pol II within the transcription cycle has been proposed. Phosphorylation at 'Ser-5' occurs in promoter-proximal regions in early elongation. Phosphorylation at 'Ser-2' predominates in regions more distal to the promoter and triggers binding of the 3' RNA processing machinery. CTD kinases include KIN28 (as part of the TFKII complex, a subcomplex of the TFIIH holo complex), SSN3/SRB10 (as part of the SRB8-11 complex, a module of the Mediator complex), CTK1 (as part of CTD kinase), and probably BUR1 (as part of the BUR1-BUR2 kinase complex). Phosphatases include FCP1 and SSU72. In terms of processing, following transcription stress, the elongating form of RNA polymerase II (RNA pol IIo) is polyubiquitinated via 'Lys-63'-linkages on Lys-1246 by the RSP5-UBA1-UBC5 complex at DNA damage sites without leading to degradation: ubiquitination promotes RNA pol IIo backtracking to allow access by the transcription-coupled nucleotide excision repair (TC-NER) machinery. Subsequent DEF1-dependent polyubiquitination by the elongin complex via 'Lys-48'-linkages may lead to proteasome-mediated degradation; presumably at stalled RNA pol II where TC-NER has failed, to halt global transcription and enable 'last resort' DNA repair pathways.

It localises to the nucleus. It carries out the reaction RNA(n) + a ribonucleoside 5'-triphosphate = RNA(n+1) + diphosphate. Functionally, DNA-dependent RNA polymerase catalyzes the transcription of DNA into RNA using the four ribonucleoside triphosphates as substrates. Largest and catalytic component of RNA polymerase II which synthesizes mRNA precursors and many functional non-coding RNAs. Forms the polymerase active center together with the second largest subunit. Pol II is the central component of the basal RNA polymerase II transcription machinery. During a transcription cycle, Pol II, general transcription factors and the Mediator complex assemble as the preinitiation complex (PIC) at the promoter. 11-15 base pairs of DNA surrounding the transcription start site are melted and the single-stranded DNA template strand of the promoter is positioned deeply within the central active site cleft of Pol II to form the open complex. After synthesis of about 30 bases of RNA, Pol II releases its contacts with the core promoter and the rest of the transcription machinery (promoter clearance) and enters the stage of transcription elongation in which it moves on the template as the transcript elongates. Pol II appears to oscillate between inactive and active conformations at each step of nucleotide addition. Elongation is influenced by the phosphorylation status of the C-terminal domain (CTD) of Pol II largest subunit (RPB1), which serves as a platform for assembly of factors that regulate transcription initiation, elongation, termination and mRNA processing. Pol II is composed of mobile elements that move relative to each other. The core element with the central large cleft comprises RPB3, RBP10, RPB11, RPB12 and regions of RPB1 and RPB2 forming the active center. The clamp element (portions of RPB1, RPB2 and RPB3) is connected to the core through a set of flexible switches and moves to open and close the cleft. A bridging helix emanates from RPB1 and crosses the cleft near the catalytic site and is thought to promote translocation of Pol II by acting as a ratchet that moves the RNA-DNA hybrid through the active site by switching from straight to bent conformations at each step of nucleotide addition. In elongating Pol II, the lid loop (RPB1) appears to act as a wedge to drive apart the DNA and RNA strands at the upstream end of the transcription bubble and guide the RNA strand toward the RNA exit groove located near the base of the largely unstructured CTD domain of RPB1. The rudder loop (RPB1) interacts with single-stranded DNA after separation from the RNA strand, likely preventing reassociation with the exiting RNA. The cleft is surrounded by jaws: an upper jaw formed by portions of RBP1, RPB2 and RPB9, and a lower jaw, formed by RPB5 and portions of RBP1. The jaws are thought to grab the incoming DNA template, mainly by RPB5 direct contacts to DNA. This is DNA-directed RNA polymerase II subunit RPB1 (RPO21) from Saccharomyces cerevisiae (strain ATCC 204508 / S288c) (Baker's yeast).